A 159-amino-acid polypeptide reads, in one-letter code: Transmembrane protein 42 (159 aa).

Transmembrane regions (helical) follow at residues 37–57 (FWGV…AASA), 59–79 (LAFG…VMAS), 100–120 (IASV…GYVL), and 124–144 (CQEV…TLIH).

It localises to the membrane. The sequence is that of Transmembrane protein 42 (TMEM42) from Pongo abelii (Sumatran orangutan).